We begin with the raw amino-acid sequence, 202 residues long: Putative 3-methyladenine DNA glycosylase (202 aa).

The protein belongs to the DNA glycosylase MPG family.

The protein is Putative 3-methyladenine DNA glycosylase of Staphylococcus haemolyticus (strain JCSC1435).